We begin with the raw amino-acid sequence, 460 residues long: Hydroxyproline dehydrogenase (460 aa).

Residue Lys310 is modified to N6-acetyllysine.

This sequence belongs to the proline oxidase family. FAD is required as a cofactor.

It catalyses the reaction trans-4-hydroxy-L-proline + a quinone = (3R,5S)-1-pyrroline-3-hydroxy-5-carboxylate + a quinol + H(+). The enzyme catalyses L-proline + a quinone = (S)-1-pyrroline-5-carboxylate + a quinol + H(+). With respect to regulation, hydroproxyproline dehydrogenase activity is inhibited by THFA,(1R,3R)3-OH-cyclopentane-COOH and 5-OH-1H-pyrazole-3-COOH. Dehydrogenase that converts trans-4-L-hydroxyproline to delta-1-pyrroline-3-hydroxy-5-carboxylate (Hyp) using ubiquinone-10 as the terminal electron acceptor. Can also use proline as a substrate but with a very much lower efficiency. Does not react with other diastereomers of Hyp: trans-4-D-hydroxyproline and cis-4-L-hydroxyproline. Ubiquininone analogs such as menadione, duroquinone and ubiquinone-1 react more efficiently than oxygen as the terminal electron acceptor during catalysis. The sequence is that of Hydroxyproline dehydrogenase from Homo sapiens (Human).